Here is a 227-residue protein sequence, read N- to C-terminus: 2-C-methyl-D-erythritol 4-phosphate cytidylyltransferase (227 aa).

It belongs to the IspD/TarI cytidylyltransferase family. IspD subfamily.

The enzyme catalyses 2-C-methyl-D-erythritol 4-phosphate + CTP + H(+) = 4-CDP-2-C-methyl-D-erythritol + diphosphate. It functions in the pathway isoprenoid biosynthesis; isopentenyl diphosphate biosynthesis via DXP pathway; isopentenyl diphosphate from 1-deoxy-D-xylulose 5-phosphate: step 2/6. In terms of biological role, catalyzes the formation of 4-diphosphocytidyl-2-C-methyl-D-erythritol from CTP and 2-C-methyl-D-erythritol 4-phosphate (MEP). The sequence is that of 2-C-methyl-D-erythritol 4-phosphate cytidylyltransferase from Petrotoga mobilis (strain DSM 10674 / SJ95).